The primary structure comprises 322 residues: TFHKPVSGASALPHIGPPPHLHRSFAATTMLSKLQSISVKARRVELARDITRPKVCLHAQRCSLVRLRVAAPQTEEALGTVQAAGAGDEHSADVALQQLDRAIAERRARRKREQLSYQAAAIAASIGVSGIAIFATYLRFAMHMTVGGAVPWGEVAGTLLLVVGGALGMEMYARYAHKAIWHESPLGWLLHKSHHTPRTGPFEANDLFAIINGLPAMLLCTFGFWLPNVLGAACFGAGLGITLYGMAYMFVHDGLVHRRFPTGPIAGLPYMKRLTVAHQLHHSGKYGGAPWGMFLGPQELQHIPGAAEEVERLVLELDWSKR.

A chloroplast-targeting transit peptide spans 1 to 68 (TFHKPVSGAS…AQRCSLVRLR (68 aa)). A run of 2 helical transmembrane segments spans residues 118–138 (QAAAIAASIGVSGIAIFATYL) and 149–169 (AVPWGEVAGTLLLVVGGALGM). One can recognise a Fatty acid hydroxylase domain in the interval 164 to 286 (GGALGMEMYA…AHQLHHSGKY (123 aa)). The Histidine box-1 signature appears at 177-182 (HKAIWH). The Histidine box-2 motif lies at 191-195 (HKSHH). The next 2 helical transmembrane spans lie at 207–227 (LFAIINGLPAMLLCTFGFWLP) and 231–251 (GAACFGAGLGITLYGMAYMFV). Residues 252–257 (HDGLVH) carry the Histidine box-3 motif. The short motif at 278–282 (HQLHH) is the Histidine box-4 element.

It belongs to the sterol desaturase family.

Its subcellular location is the plastid. The protein localises to the chloroplast membrane. The enzyme catalyses all-trans-beta-carotene + 4 reduced [2Fe-2S]-[ferredoxin] + 2 O2 + 4 H(+) = all-trans-zeaxanthin + 4 oxidized [2Fe-2S]-[ferredoxin] + 2 H2O. Its function is as follows. Nonheme diiron monooxygenase involved in the biosynthesis of astaxanthin. Hydroxylates beta-ring of beta-carotene and catalyzes the conversion of canthaxanthin to astaxanthin. Uses ferredoxin as an electron donor. The polypeptide is Beta-carotene 3-hydroxylase, chloroplastic (CRTZ) (Haematococcus lacustris (Green alga)).